Reading from the N-terminus, the 1407-residue chain is DNA-directed RNA polymerase subunit beta' (1407 aa).

Zn(2+) contacts are provided by cysteine 70, cysteine 72, cysteine 85, and cysteine 88. Residues aspartate 458, aspartate 460, and aspartate 462 each contribute to the Mg(2+) site. Residues cysteine 814, cysteine 888, cysteine 895, and cysteine 898 each contribute to the Zn(2+) site.

Belongs to the RNA polymerase beta' chain family. In terms of assembly, the RNAP catalytic core consists of 2 alpha, 1 beta, 1 beta' and 1 omega subunit. When a sigma factor is associated with the core the holoenzyme is formed, which can initiate transcription. Mg(2+) serves as cofactor. Zn(2+) is required as a cofactor.

The catalysed reaction is RNA(n) + a ribonucleoside 5'-triphosphate = RNA(n+1) + diphosphate. In terms of biological role, DNA-dependent RNA polymerase catalyzes the transcription of DNA into RNA using the four ribonucleoside triphosphates as substrates. The chain is DNA-directed RNA polymerase subunit beta' from Leptothrix cholodnii (strain ATCC 51168 / LMG 8142 / SP-6) (Leptothrix discophora (strain SP-6)).